A 101-amino-acid polypeptide reads, in one-letter code: Phosphoribosyl-AMP cyclohydrolase (101 aa).

Aspartate 71 is a binding site for Mg(2+). Position 72 (cysteine 72) interacts with Zn(2+). Residues aspartate 73 and aspartate 75 each contribute to the Mg(2+) site. 2 residues coordinate Zn(2+): cysteine 88 and cysteine 95.

This sequence belongs to the PRA-CH family. As to quaternary structure, homodimer. Mg(2+) serves as cofactor. Requires Zn(2+) as cofactor.

The protein resides in the cytoplasm. It carries out the reaction 1-(5-phospho-beta-D-ribosyl)-5'-AMP + H2O = 1-(5-phospho-beta-D-ribosyl)-5-[(5-phospho-beta-D-ribosylamino)methylideneamino]imidazole-4-carboxamide. The protein operates within amino-acid biosynthesis; L-histidine biosynthesis; L-histidine from 5-phospho-alpha-D-ribose 1-diphosphate: step 3/9. Catalyzes the hydrolysis of the adenine ring of phosphoribosyl-AMP. This is Phosphoribosyl-AMP cyclohydrolase from Bacillus cereus (strain ATCC 14579 / DSM 31 / CCUG 7414 / JCM 2152 / NBRC 15305 / NCIMB 9373 / NCTC 2599 / NRRL B-3711).